Reading from the N-terminus, the 705-residue chain is Polyribonucleotide nucleotidyltransferase (705 aa).

Residues D486 and D492 each contribute to the Mg(2+) site. Residues 553–612 (PQFHTMKVDPEKIRDIIGKGGATIRSITEETGASIDIDDDGTVKIYGDDGDSLQGAINRI) enclose the KH domain. Positions 622-690 (GEVYKGKVVR…QRGRIKLSIK (69 aa)) constitute an S1 motif domain.

Belongs to the polyribonucleotide nucleotidyltransferase family. In terms of assembly, component of the RNA degradosome, which is a multiprotein complex involved in RNA processing and mRNA degradation. Mg(2+) serves as cofactor.

It is found in the cytoplasm. The enzyme catalyses RNA(n+1) + phosphate = RNA(n) + a ribonucleoside 5'-diphosphate. Involved in mRNA degradation. Catalyzes the phosphorolysis of single-stranded polyribonucleotides processively in the 3'- to 5'-direction. In Teredinibacter turnerae (strain ATCC 39867 / T7901), this protein is Polyribonucleotide nucleotidyltransferase.